The primary structure comprises 404 residues: GID complex subunit 9 (404 aa).

The region spanning 116-148 is the LisH domain; that stretch reads SRVRLNRLVADYMMANGYHGAAALLCKDSQLEN. One can recognise a CTLH domain in the interval 154 to 211; the sequence is IYKRYQLIHDSILQQELKEVLSWCSEHRAILKKNNSTLELEVRLQRFIELIKSKKLCQ. The RING-Gid-type zinc finger occupies 317-389; it reads CPVCTPCLND…REGFLRDPYS (73 aa).

It belongs to the FYV10 family. Identified in the GID/CTLH complex. In the absence of stress, the complex exists as an inactive anticipatory complex (GID(Ant)), composed of Gid1, the E3 ubiquitin-ligase Gid2, Gid5, Gid8, and the RING-like subunit Gid9, awaiting a substrate receptor to form the active E3 ligase complex. When cells are shifted to glucose-containing medium, the substrate receptor Gid4 is induced and becomes part of the complex, named GID(SR4). Additionally, Gid7 transforms the GID(SR4) E3 ligase core into a higher-order supramolecular assembly (Chelator-GID(SR4)). Under osmotic or heat stress, the substrate receptor Gid10 is induced and becomes part of the complex, named GID(SR10).

The protein localises to the cytoplasm. The protein resides in the nucleus. The enzyme catalyses S-ubiquitinyl-[E2 ubiquitin-conjugating enzyme]-L-cysteine + [acceptor protein]-L-lysine = [E2 ubiquitin-conjugating enzyme]-L-cysteine + N(6)-ubiquitinyl-[acceptor protein]-L-lysine.. It participates in protein modification; protein ubiquitination. Its function is as follows. Component of the GID E3 ligase complex recruiting N termini and catalyzing ubiquitination of proteins targeted for degradation. GID E3 is regulated through assembly with interchangeable N-degron-binding substrate receptors induced by distinct environmental perturbations. Required for the adaptation to the presence of glucose in the growth medium; mediates in association with the substrate receptor VID24/GID4 the degradation of enzymes involved in gluconeogenesis when cells are shifted to glucose-containing medium. This Schizosaccharomyces pombe (strain 972 / ATCC 24843) (Fission yeast) protein is GID complex subunit 9 (gid9).